Reading from the N-terminus, the 93-residue chain is MSTTFDKVAKIIADTSEIDIDTITPESHTIDDLGIDSLDFLDIVFAIDKEFGIKVPLEKWTQEVNDGKASTDDYFVMKNLCAKIDALVAAKTA.

The Carrier domain occupies 2–88 (STTFDKVAKI…NLCAKIDALV (87 aa)). Serine 37 carries the post-translational modification O-(pantetheine 4'-phosphoryl)serine.

Post-translationally, 4'-phosphopantetheine is transferred from CoA to a specific serine of apo-ACP by AcpS. This modification is essential for activity because fatty acids are bound in thioester linkage to the sulfhydryl of the prosthetic group.

Its subcellular location is the cytoplasm. It functions in the pathway glycolipid biosynthesis; KDO(2)-lipid A biosynthesis. Its function is as follows. Carrier of the growing fatty acid chain in fatty acid biosynthesis. Is involved in the transfer of long hydroxylated fatty acids to lipid A. This chain is Acyl carrier protein AcpXL (acpXL), found in Mesorhizobium japonicum (strain LMG 29417 / CECT 9101 / MAFF 303099) (Mesorhizobium loti (strain MAFF 303099)).